The following is a 279-amino-acid chain: Probable endonuclease 4 (279 aa).

Zn(2+)-binding residues include His69, His109, Glu145, Asp179, His182, His216, Asp229, His231, and Glu261.

The protein belongs to the AP endonuclease 2 family. Requires Zn(2+) as cofactor.

It carries out the reaction Endonucleolytic cleavage to 5'-phosphooligonucleotide end-products.. Functionally, endonuclease IV plays a role in DNA repair. It cleaves phosphodiester bonds at apurinic or apyrimidinic (AP) sites, generating a 3'-hydroxyl group and a 5'-terminal sugar phosphate. In Chlorobium phaeovibrioides (strain DSM 265 / 1930) (Prosthecochloris vibrioformis (strain DSM 265)), this protein is Probable endonuclease 4.